Reading from the N-terminus, the 736-residue chain is 1,4-alpha-glucan branching enzyme GlgB 2 (736 aa).

The active-site Nucleophile is aspartate 415. Glutamate 468 functions as the Proton donor in the catalytic mechanism.

The protein belongs to the glycosyl hydrolase 13 family. GlgB subfamily. In terms of assembly, monomer.

It catalyses the reaction Transfers a segment of a (1-&gt;4)-alpha-D-glucan chain to a primary hydroxy group in a similar glucan chain.. It participates in glycan biosynthesis; glycogen biosynthesis. Catalyzes the formation of the alpha-1,6-glucosidic linkages in glycogen by scission of a 1,4-alpha-linked oligosaccharide from growing alpha-1,4-glucan chains and the subsequent attachment of the oligosaccharide to the alpha-1,6 position. The chain is 1,4-alpha-glucan branching enzyme GlgB 2 from Rhizobium johnstonii (strain DSM 114642 / LMG 32736 / 3841) (Rhizobium leguminosarum bv. viciae).